The sequence spans 520 residues: Retinoic acid receptor RXR-beta (520 aa).

The disordered stretch occupies residues 1-167 (MSWATRPPFL…GGSGPPEDVK (167 aa)). The tract at residues 1–191 (MSWATRPPFL…PGGPGAGKRL (191 aa)) is modulating. The residue at position 25 (Arg25) is an Omega-N-methylarginine. Positions 64 to 79 (EAGRDGMGDSGRDSRS) are enriched in basic and acidic residues. The span at 95 to 118 (SSPPGPPLTPSAPPPPMPPPPLGS) shows a compositional bias: pro residues. Positions 119 to 130 (PFPVISSSMGSP) are enriched in low complexity. Over residues 131 to 140 (GLPPPAPPGF) the composition is skewed to pro residues. 2 consecutive NR C4-type zinc fingers follow at residues 192–212 (CAIC…CEGC) and 228–252 (CRDN…YQKC). The nuclear receptor DNA-binding region spans 192–257 (CAICGDRSSG…RYQKCLATGM (66 aa)). A hinge region spans residues 258–382 (KREAVQEERQ…HRSIDVRDGI (125 aa)). Positions 263–275 (QEERQRGKDKDGD) are enriched in basic and acidic residues. Disordered stretches follow at residues 263–285 (QEER…APEE) and 300–323 (QKSD…NDPV). The region spanning 283–516 (PEEMPVDRIL…TFLMEMLEAP (234 aa)) is the NR LBD domain. A compositionally biased stretch (gly residues) spans 307-317 (EGPGATGGGGS).

Belongs to the nuclear hormone receptor family. NR2 subfamily. As to quaternary structure, homodimer (in vitro). Heterodimer with other retinoic acid receptor family members. Binds DNA preferentially as a RAR/RXR heterodimer. Interacts with NR1H3. Interacts with AKAP13. In terms of tissue distribution, in all tissues tested, including brain, thymus, spleen and liver.

The protein localises to the nucleus. Its subcellular location is the cytoplasm. Its function is as follows. Receptor for retinoic acid. Retinoic acid receptors bind as heterodimers to their target response elements in response to their ligands, all-trans or 9-cis retinoic acid, and regulate gene expression in various biological processes. The RAR/RXR heterodimers bind to the retinoic acid response elements (RARE). The protein is Retinoic acid receptor RXR-beta (Rxrb) of Mus musculus (Mouse).